We begin with the raw amino-acid sequence, 216 residues long: 3-isopropylmalate dehydratase small subunit (216 aa).

Belongs to the LeuD family. LeuD type 1 subfamily. Heterodimer of LeuC and LeuD.

The catalysed reaction is (2R,3S)-3-isopropylmalate = (2S)-2-isopropylmalate. Its pathway is amino-acid biosynthesis; L-leucine biosynthesis; L-leucine from 3-methyl-2-oxobutanoate: step 2/4. Catalyzes the isomerization between 2-isopropylmalate and 3-isopropylmalate, via the formation of 2-isopropylmaleate. This Acinetobacter baylyi (strain ATCC 33305 / BD413 / ADP1) protein is 3-isopropylmalate dehydratase small subunit.